Here is a 340-residue protein sequence, read N- to C-terminus: uncharacterized protein (340 aa).

Its subcellular location is the virion. This is an uncharacterized protein from Acanthamoeba polyphaga (Amoeba).